Reading from the N-terminus, the 658-residue chain is UvrABC system protein B (658 aa).

The Helicase ATP-binding domain maps to 25-178 (KSLKNKNHYQ…KSFLLKLVEM (154 aa)). 38–45 (GVTGSGKT) contacts ATP. Residues 91 to 114 (HFDYYQPESYIPRRDLFIEKDSSI) carry the Beta-hairpin motif. The 175-residue stretch at 433–607 (QVQDLFDEIK…ELKLRDDETK (175 aa)) folds into the Helicase C-terminal domain. The region spanning 623–658 (EKIIKELDKKMRECAKNLDFEEAMHLRDEIAKLRTL) is the UVR domain.

This sequence belongs to the UvrB family. In terms of assembly, forms a heterotetramer with UvrA during the search for lesions. Interacts with UvrC in an incision complex.

It localises to the cytoplasm. The UvrABC repair system catalyzes the recognition and processing of DNA lesions. A damage recognition complex composed of 2 UvrA and 2 UvrB subunits scans DNA for abnormalities. Upon binding of the UvrA(2)B(2) complex to a putative damaged site, the DNA wraps around one UvrB monomer. DNA wrap is dependent on ATP binding by UvrB and probably causes local melting of the DNA helix, facilitating insertion of UvrB beta-hairpin between the DNA strands. Then UvrB probes one DNA strand for the presence of a lesion. If a lesion is found the UvrA subunits dissociate and the UvrB-DNA preincision complex is formed. This complex is subsequently bound by UvrC and the second UvrB is released. If no lesion is found, the DNA wraps around the other UvrB subunit that will check the other stand for damage. This is UvrABC system protein B from Helicobacter acinonychis (strain Sheeba).